Here is a 247-residue protein sequence, read N- to C-terminus: MINPSSMENFNMLYQLSKVEVGQHFYWQIGDFEVHGQVLLVSWFVMTIIISLSIFGTRNLQTIPTGTQNFVEYVLEFIRDLAKTQIGEEDYRSWVPFIGTIFLFIFVSNWSGALVPWKLIEIPNGELAAPTNDINTTAALALLTSISYFYAGFSKKGLRYFKRYISPTPVLLPINLLEDFTKPLSLSFRLFGNILADELVVGVLITLVPLVVPMPLMLLGLFTSAIQALIFATLAAAYIGEAVEDHH.

5 helical membrane passes run 36 to 56, 95 to 115, 134 to 154, 199 to 219, and 220 to 240; these read GQVL…SIFG, VPFI…GALV, INTT…AGFS, LVVG…LMLL, and GLFT…AYIG.

Belongs to the ATPase A chain family. As to quaternary structure, F-type ATPases have 2 components, CF(1) - the catalytic core - and CF(0) - the membrane proton channel. CF(1) has five subunits: alpha(3), beta(3), gamma(1), delta(1), epsilon(1). CF(0) has four main subunits: a, b, b' and c.

Its subcellular location is the plastid. It is found in the chloroplast thylakoid membrane. In terms of biological role, key component of the proton channel; it plays a direct role in the translocation of protons across the membrane. In Mesostigma viride (Green alga), this protein is ATP synthase subunit a, chloroplastic.